We begin with the raw amino-acid sequence, 114 residues long: Histone H3-6 (114 aa).

Residues 1–17 (NTGGKAPRKHIAHKQAK) are compositionally biased toward basic residues. The segment at 1–32 (NTGGKAPRKHIAHKQAKKSSAAAATGGVKKPH) is disordered. Residues 18–28 (KSSAAAATGGV) show a composition bias toward low complexity.

Belongs to the histone H3 family. As to quaternary structure, the nucleosome is a histone octamer containing two molecules each of H2A, H2B, H3 and H4 assembled in one H3-H4 heterotetramer and two H2A-H2B heterodimers. The octamer wraps approximately 147 bp of DNA.

The protein resides in the nucleus. Its subcellular location is the chromosome. Core component of nucleosome. Nucleosomes wrap and compact DNA into chromatin, limiting DNA accessibility to the cellular machineries which require DNA as a template. Histones thereby play a central role in transcription regulation, DNA repair, DNA replication and chromosomal stability. DNA accessibility is regulated via a complex set of post-translational modifications of histones, also called histone code, and nucleosome remodeling. The protein is Histone H3-6 (H3-6) of Stylonychia lemnae (Ciliate).